Here is a 1436-residue protein sequence, read N- to C-terminus: Pleiotropic drug resistance protein 1 (1436 aa).

Residues leucine 165 to glutamate 438 form the ABC transporter 1 domain. Residue glycine 198–threonine 205 participates in ATP binding. The region spanning glutamine 516–phenylalanine 729 is the ABC transmembrane type-2 1 domain. 7 consecutive transmembrane segments (helical) span residues phenylalanine 534–phenylalanine 554, glycine 567–serine 587, isoleucine 622–phenylalanine 642, phenylalanine 653–valine 673, valine 679–leucine 699, tryptophan 707–asparagine 727, and isoleucine 764–leucine 784. Residues threonine 796–lysine 826 form a disordered region. Over residues proline 810–alanine 821 the composition is skewed to polar residues. The ABC transporter 2 domain occupies isoleucine 838–proline 1090. ATP is bound at residue glycine 883–threonine 890. An ABC transmembrane type-2 2 domain is found at threonine 1163 to phenylalanine 1377. 7 helical membrane-spanning segments follow: residues alanine 1184 to isoleucine 1204, leucine 1214 to serine 1234, isoleucine 1270 to phenylalanine 1290, phenylalanine 1301 to valine 1321, valine 1327 to valine 1347, tryptophan 1358 to glycine 1378, and valine 1408 to isoleucine 1428.

This sequence belongs to the ABC transporter superfamily. ABCG family. PDR (TC 3.A.1.205) subfamily. As to expression, roots, petals and leaf epidermis, where it is confined to glandular trichomes (at protein level).

The protein localises to the cell membrane. Its function is as follows. Excretes secondary metabolites such as terpenes. Involved in both constitutive and jasmonic acid-dependent induced defense. Confers some resistance to sclareol and B.cinerea. This is Pleiotropic drug resistance protein 1 (PDR1) from Nicotiana plumbaginifolia (Leadwort-leaved tobacco).